A 291-amino-acid polypeptide reads, in one-letter code: Undecaprenyl-diphosphatase (291 aa).

Helical transmembrane passes span 1 to 21, 48 to 68, 102 to 122, 126 to 146, 162 to 182, 203 to 223, 231 to 251, and 267 to 287; these read MFII…LTEF, SAFT…AWVF, LHVL…DDFI, LFSV…MIIA, INYF…WPGF, SDFT…LSLL, IADI…GLIA, and FAIY…GFGI.

It belongs to the UppP family.

The protein resides in the cell membrane. The catalysed reaction is di-trans,octa-cis-undecaprenyl diphosphate + H2O = di-trans,octa-cis-undecaprenyl phosphate + phosphate + H(+). In terms of biological role, catalyzes the dephosphorylation of undecaprenyl diphosphate (UPP). Confers resistance to bacitracin. In Staphylococcus aureus (strain Mu3 / ATCC 700698), this protein is Undecaprenyl-diphosphatase.